The sequence spans 110 residues: Small ribosomal subunit protein bS16 (110 aa).

The disordered stretch occupies residues 84–110 (KRTARNNPEKAVPRKERKAQAEAAAKS). Residues 90–103 (NPEKAVPRKERKAQ) show a composition bias toward basic and acidic residues.

This sequence belongs to the bacterial ribosomal protein bS16 family.

The sequence is that of Small ribosomal subunit protein bS16 from Nitrobacter hamburgensis (strain DSM 10229 / NCIMB 13809 / X14).